A 210-amino-acid chain; its full sequence is Ribosomal RNA large subunit methyltransferase E (210 aa).

The S-adenosyl-L-methionine site is built by glycine 61, tryptophan 63, aspartate 81, aspartate 97, and aspartate 122. The active-site Proton acceptor is the lysine 162. A compositionally biased stretch (basic and acidic residues) spans 187 to 196; the sequence is KPEASRKRSP. The interval 187–210 is disordered; the sequence is KPEASRKRSPEVYALGQGKRAHMK.

It belongs to the class I-like SAM-binding methyltransferase superfamily. RNA methyltransferase RlmE family.

It localises to the cytoplasm. It carries out the reaction uridine(2552) in 23S rRNA + S-adenosyl-L-methionine = 2'-O-methyluridine(2552) in 23S rRNA + S-adenosyl-L-homocysteine + H(+). Its function is as follows. Specifically methylates the uridine in position 2552 of 23S rRNA at the 2'-O position of the ribose in the fully assembled 50S ribosomal subunit. This is Ribosomal RNA large subunit methyltransferase E from Stenotrophomonas maltophilia (strain R551-3).